The following is a 305-amino-acid chain: MSEHTFARASHLSELEAESIHILRETVAEFANPVMLYSIGKDSQVLLHLARKAFHPAPLPFPLLHVDTTWKFRDMYAFRDAFVARHGLRLIIHRNQRALAEGINPFDHGSQKYTHAMKTQALLEALAAHGFDAAFGGARRDEEKSRAKERVFSFRDRHGQWDPRRQRPELWNLFNGRVDAGESMRVFPLSNWTELDVWHYVLRERIPVVPLYFAAERPVIDRGGTLLMVDDERMRLRPGEKPEIRRVRFRTLGCYPLSGAIESSATTVETVIHEMVNARQSERQGRLIDHDEEGSMELKKREGYF.

It belongs to the PAPS reductase family. CysD subfamily. As to quaternary structure, heterodimer composed of CysD, the smaller subunit, and CysN.

The catalysed reaction is sulfate + ATP + H(+) = adenosine 5'-phosphosulfate + diphosphate. Its pathway is sulfur metabolism; hydrogen sulfide biosynthesis; sulfite from sulfate: step 1/3. In terms of biological role, with CysN forms the ATP sulfurylase (ATPS) that catalyzes the adenylation of sulfate producing adenosine 5'-phosphosulfate (APS) and diphosphate, the first enzymatic step in sulfur assimilation pathway. APS synthesis involves the formation of a high-energy phosphoric-sulfuric acid anhydride bond driven by GTP hydrolysis by CysN coupled to ATP hydrolysis by CysD. The protein is Sulfate adenylyltransferase subunit 2 of Myxococcus xanthus (strain DK1622).